The following is a 231-amino-acid chain: Large ribosomal subunit protein uL1 (231 aa).

The protein belongs to the universal ribosomal protein uL1 family. As to quaternary structure, part of the 50S ribosomal subunit.

In terms of biological role, binds directly to 23S rRNA. The L1 stalk is quite mobile in the ribosome, and is involved in E site tRNA release. Its function is as follows. Protein L1 is also a translational repressor protein, it controls the translation of the L11 operon by binding to its mRNA. The protein is Large ribosomal subunit protein uL1 of Pseudomonas putida (strain ATCC 700007 / DSM 6899 / JCM 31910 / BCRC 17059 / LMG 24140 / F1).